The primary structure comprises 723 residues: Polyribonucleotide nucleotidyltransferase (723 aa).

Positions 488 and 494 each coordinate Mg(2+). In terms of domain architecture, KH spans 555–614; it reads PKIITLNIKPEKIKDVIGPGGKQINAIIDETGVKIDIEQDGTVYIASQDQAMNRKAIAII. In terms of domain architecture, S1 motif spans 624-692; that stretch reads GEVYTGKVRR…QQGRVNLSRK (69 aa). Residues 692–723 are disordered; the sequence is KALLEKKEQPEGDKKPQAEKKFYPKTKKPESK. The segment covering 693 to 723 has biased composition (basic and acidic residues); that stretch reads ALLEKKEQPEGDKKPQAEKKFYPKTKKPESK.

It belongs to the polyribonucleotide nucleotidyltransferase family. It depends on Mg(2+) as a cofactor.

The protein resides in the cytoplasm. It catalyses the reaction RNA(n+1) + phosphate = RNA(n) + a ribonucleoside 5'-diphosphate. Functionally, involved in mRNA degradation. Catalyzes the phosphorolysis of single-stranded polyribonucleotides processively in the 3'- to 5'-direction. The chain is Polyribonucleotide nucleotidyltransferase from Listeria monocytogenes serovar 1/2a (strain ATCC BAA-679 / EGD-e).